The sequence spans 649 residues: Acetyl-coenzyme A synthetase (649 aa).

Residues 198–201 (RRGK), Thr317, and Asn341 contribute to the CoA site. ATP is bound by residues 393–395 (GEP), 417–422 (DTWWQT), Asp506, and Arg521. A CoA-binding site is contributed by Ser529. Arg532 serves as a coordination point for ATP. 3 residues coordinate Mg(2+): Val543, His545, and Val548. At Lys612 the chain carries N6-acetyllysine. A disordered region spans residues 625–649 (QPVQGDTSTLEDPTVLERLQASPAL).

The protein belongs to the ATP-dependent AMP-binding enzyme family. Requires Mg(2+) as cofactor. Acetylated. Deacetylation by the SIR2-homolog deacetylase activates the enzyme.

It carries out the reaction acetate + ATP + CoA = acetyl-CoA + AMP + diphosphate. Functionally, catalyzes the conversion of acetate into acetyl-CoA (AcCoA), an essential intermediate at the junction of anabolic and catabolic pathways. AcsA undergoes a two-step reaction. In the first half reaction, AcsA combines acetate with ATP to form acetyl-adenylate (AcAMP) intermediate. In the second half reaction, it can then transfer the acetyl group from AcAMP to the sulfhydryl group of CoA, forming the product AcCoA. The protein is Acetyl-coenzyme A synthetase of Deinococcus radiodurans (strain ATCC 13939 / DSM 20539 / JCM 16871 / CCUG 27074 / LMG 4051 / NBRC 15346 / NCIMB 9279 / VKM B-1422 / R1).